The following is a 388-amino-acid chain: 3-dehydroquinate synthase (388 aa).

The protein belongs to the archaeal-type DHQ synthase family.

The catalysed reaction is 2-amino-2,3,7-trideoxy-D-lyxo-hept-6-ulosonate + NAD(+) + H2O = 3-dehydroquinate + NH4(+) + NADH + H(+). Its function is as follows. Catalyzes the oxidative deamination and cyclization of 2-amino-3,7-dideoxy-D-threo-hept-6-ulosonic acid (ADH) to yield 3-dehydroquinate (DHQ), which is fed into the canonical shikimic pathway of aromatic amino acid biosynthesis. The sequence is that of 3-dehydroquinate synthase from Haloarcula marismortui (strain ATCC 43049 / DSM 3752 / JCM 8966 / VKM B-1809) (Halobacterium marismortui).